Here is a 700-residue protein sequence, read N- to C-terminus: Elongation factor G (700 aa).

The tr-type G domain occupies 10–286 (NKVRNIGIMA…AVIDYLPNPL (277 aa)). GTP contacts are provided by residues 19–26 (AHIDAGKT), 83–87 (DTPGH), and 137–140 (NKMD).

Belongs to the TRAFAC class translation factor GTPase superfamily. Classic translation factor GTPase family. EF-G/EF-2 subfamily.

The protein resides in the cytoplasm. In terms of biological role, catalyzes the GTP-dependent ribosomal translocation step during translation elongation. During this step, the ribosome changes from the pre-translocational (PRE) to the post-translocational (POST) state as the newly formed A-site-bound peptidyl-tRNA and P-site-bound deacylated tRNA move to the P and E sites, respectively. Catalyzes the coordinated movement of the two tRNA molecules, the mRNA and conformational changes in the ribosome. The sequence is that of Elongation factor G from Rhodococcus jostii (strain RHA1).